The chain runs to 283 residues: Light-independent protochlorophyllide reductase iron-sulfur ATP-binding protein (283 aa).

ATP is bound by residues 15–20 (GIGKST) and K44. S19 is a binding site for Mg(2+). [4Fe-4S] cluster contacts are provided by C100 and C134. 185–186 (NR) serves as a coordination point for ATP.

It belongs to the NifH/BchL/ChlL family. In terms of assembly, homodimer. Protochlorophyllide reductase is composed of three subunits; ChlL, ChlN and ChlB. [4Fe-4S] cluster serves as cofactor.

The enzyme catalyses chlorophyllide a + oxidized 2[4Fe-4S]-[ferredoxin] + 2 ADP + 2 phosphate = protochlorophyllide a + reduced 2[4Fe-4S]-[ferredoxin] + 2 ATP + 2 H2O. It functions in the pathway porphyrin-containing compound metabolism; chlorophyll biosynthesis (light-independent). Functionally, component of the dark-operative protochlorophyllide reductase (DPOR) that uses Mg-ATP and reduced ferredoxin to reduce ring D of protochlorophyllide (Pchlide) to form chlorophyllide a (Chlide). This reaction is light-independent. The L component serves as a unique electron donor to the NB-component of the complex, and binds Mg-ATP. The chain is Light-independent protochlorophyllide reductase iron-sulfur ATP-binding protein from Synechococcus sp. (strain JA-3-3Ab) (Cyanobacteria bacterium Yellowstone A-Prime).